The sequence spans 260 residues: Recombination-promoting nuclease RpnD (260 aa).

Belongs to the Rpn/YhgA-like nuclease family.

A low activity DNA endonuclease probably yielding 3'-hydroxyl ends. Involved in RecA-independent recombination and horizontal gene transfer. In Escherichia coli O157:H7, this protein is Recombination-promoting nuclease RpnD (rpnD).